The sequence spans 102 residues: Urease subunit beta (102 aa).

The protein belongs to the urease beta subunit family. Heterotrimer of UreA (gamma), UreB (beta) and UreC (alpha) subunits. Three heterotrimers associate to form the active enzyme.

The protein resides in the cytoplasm. It carries out the reaction urea + 2 H2O + H(+) = hydrogencarbonate + 2 NH4(+). It participates in nitrogen metabolism; urea degradation; CO(2) and NH(3) from urea (urease route): step 1/1. This chain is Urease subunit beta, found in Blochmanniella pennsylvanica (strain BPEN).